We begin with the raw amino-acid sequence, 248 residues long: Ribosomal RNA small subunit methyltransferase G (248 aa).

S-adenosyl-L-methionine is bound by residues Gly-93, Leu-98, 143–144, and Arg-161; that span reads AE.

This sequence belongs to the methyltransferase superfamily. RNA methyltransferase RsmG family.

The protein localises to the cytoplasm. Specifically methylates the N7 position of guanine in position 518 of 16S rRNA. The polypeptide is Ribosomal RNA small subunit methyltransferase G (Mycobacterium leprae (strain Br4923)).